Reading from the N-terminus, the 235-residue chain is Small ribosomal subunit protein eS6 (235 aa).

A phosphoserine mark is found at S229 and S230.

Belongs to the eukaryotic ribosomal protein eS6 family. Post-translationally, phosphorylated.

In Kluyveromyces marxianus (Yeast), this protein is Small ribosomal subunit protein eS6 (RPS6).